The primary structure comprises 331 residues: Pantothenate kinase (331 aa).

109–116 contributes to the ATP binding site; the sequence is GSVAVGKS.

Belongs to the prokaryotic pantothenate kinase family.

It localises to the cytoplasm. It catalyses the reaction (R)-pantothenate + ATP = (R)-4'-phosphopantothenate + ADP + H(+). Its pathway is cofactor biosynthesis; coenzyme A biosynthesis; CoA from (R)-pantothenate: step 1/5. This Rhizobium leguminosarum bv. trifolii (strain WSM2304) protein is Pantothenate kinase.